The following is a 229-amino-acid chain: Lipoprotein-releasing system ATP-binding protein LolD (229 aa).

An ABC transporter domain is found at 9-229 (LRLEQVARRY…TIREGQIVPA (221 aa)). 45–52 (APSGTGKS) serves as a coordination point for ATP.

Belongs to the ABC transporter superfamily. Lipoprotein translocase (TC 3.A.1.125) family. In terms of assembly, the complex is composed of two ATP-binding proteins (LolD) and two transmembrane proteins (LolC and LolE).

The protein resides in the cell inner membrane. Functionally, part of the ABC transporter complex LolCDE involved in the translocation of mature outer membrane-directed lipoproteins, from the inner membrane to the periplasmic chaperone, LolA. Responsible for the formation of the LolA-lipoprotein complex in an ATP-dependent manner. The protein is Lipoprotein-releasing system ATP-binding protein LolD of Granulibacter bethesdensis (strain ATCC BAA-1260 / CGDNIH1).